A 325-amino-acid polypeptide reads, in one-letter code: Tetraacyldisaccharide 4'-kinase (325 aa).

58 to 65 is a binding site for ATP; sequence TVGGSGKT.

The protein belongs to the LpxK family.

It catalyses the reaction a lipid A disaccharide + ATP = a lipid IVA + ADP + H(+). It functions in the pathway glycolipid biosynthesis; lipid IV(A) biosynthesis; lipid IV(A) from (3R)-3-hydroxytetradecanoyl-[acyl-carrier-protein] and UDP-N-acetyl-alpha-D-glucosamine: step 6/6. Its function is as follows. Transfers the gamma-phosphate of ATP to the 4'-position of a tetraacyldisaccharide 1-phosphate intermediate (termed DS-1-P) to form tetraacyldisaccharide 1,4'-bis-phosphate (lipid IVA). The sequence is that of Tetraacyldisaccharide 4'-kinase from Coxiella burnetii (strain CbuG_Q212) (Coxiella burnetii (strain Q212)).